The sequence spans 163 residues: Nucleotide-binding protein CGSHiGG_08790 (163 aa).

This sequence belongs to the YajQ family.

Its function is as follows. Nucleotide-binding protein. The polypeptide is Nucleotide-binding protein CGSHiGG_08790 (Haemophilus influenzae (strain PittGG)).